Reading from the N-terminus, the 168-residue chain is DNA damage-inducible transcript 3 protein (168 aa).

The tract at residues 10–18 (LETVSSWEL) is interaction with TRIB3. An N-terminal region spans residues 10-26 (LETVSSWELEAWYEDLQ). Phosphoserine; by CK2 occurs at positions 14, 15, 30, and 31. Residues 30-43 (SSDENGGPYSSSLG) show a composition bias toward polar residues. Residues 30 to 168 (SSDENGGPYS…DRPHVNLQQV (139 aa)) form a disordered region. Positions 74–87 (SSSQSPRSPDSSQS) are enriched in low complexity. Serine 78 and serine 81 each carry phosphoserine; by MAPK14. A bZIP domain is found at 98–161 (GRTRKRKQSG…EATRPGSDRP (64 aa)). Residues 101 to 129 (RKRKQSGQCPARGTGKQRMKEKEQENERK) are basic motif. Residues 118 to 162 (RMKEKEQENERKVAQLAEENERLKQEIERLTREVEATRPGSDRPH) show a composition bias toward basic and acidic residues. Residues 133–147 (LAEENERLKQEIERL) form a leucine-zipper region.

Belongs to the bZIP family. In terms of assembly, heterodimer. Interacts with TCF7L2/TCF4, EP300/P300, HDAC1, HDAC5 and HDAC6. Interacts with TRIB3 which blocks its association with EP300/P300. Interacts with FOXO3, CEBPB and ATF4. In terms of processing, ubiquitinated, leading to its degradation by the proteasome. Phosphorylation at serine residues by MAPK14 enhances its transcriptional activation activity while phosphorylation at serine residues by CK2 inhibits its transcriptional activation activity.

The protein localises to the cytoplasm. The protein resides in the nucleus. In terms of biological role, multifunctional transcription factor in ER stress response. Plays an essential role in the response to a wide variety of cell stresses and induces cell cycle arrest and apoptosis in response to ER stress. Plays a dual role both as an inhibitor of CCAAT/enhancer-binding protein (C/EBP) function and as an activator of other genes. Acts as a dominant-negative regulator of C/EBP-induced transcription: dimerizes with members of the C/EBP family, impairs their association with C/EBP binding sites in the promoter regions, and inhibits the expression of C/EBP regulated genes. Positively regulates the transcription of TRIB3, IL6, IL8, IL23, TNFRSF10B/DR5, PPP1R15A/GADD34, BBC3/PUMA, BCL2L11/BIM and ERO1L. Negatively regulates; expression of BCL2 and MYOD1, ATF4-dependent transcriptional activation of asparagine synthetase (ASNS), CEBPA-dependent transcriptional activation of hepcidin (HAMP) and CEBPB-mediated expression of peroxisome proliferator-activated receptor gamma (PPARG). Inhibits the canonical Wnt signaling pathway by binding to TCF7L2/TCF4, impairing its DNA-binding properties and repressing its transcriptional activity. Plays a regulatory role in the inflammatory response through the induction of caspase-11 (CASP4/CASP11) which induces the activation of caspase-1 (CASP1) and both these caspases increase the activation of pro-IL1B to mature IL1B which is involved in the inflammatory response. The protein is DNA damage-inducible transcript 3 protein (DDIT3) of Cricetulus griseus (Chinese hamster).